The following is a 102-amino-acid chain: Large ribosomal subunit protein uL24 (102 aa).

The protein belongs to the universal ribosomal protein uL24 family. As to quaternary structure, part of the 50S ribosomal subunit.

One of two assembly initiator proteins, it binds directly to the 5'-end of the 23S rRNA, where it nucleates assembly of the 50S subunit. Functionally, one of the proteins that surrounds the polypeptide exit tunnel on the outside of the subunit. In Finegoldia magna (strain ATCC 29328 / DSM 20472 / WAL 2508) (Peptostreptococcus magnus), this protein is Large ribosomal subunit protein uL24.